A 128-amino-acid chain; its full sequence is Iron-sulfur cluster insertion protein ErpA (128 aa).

Residues cysteine 56, cysteine 120, and cysteine 122 each coordinate iron-sulfur cluster.

It belongs to the HesB/IscA family. As to quaternary structure, homodimer. The cofactor is iron-sulfur cluster.

In terms of biological role, required for insertion of 4Fe-4S clusters for at least IspG. In Xanthomonas campestris pv. campestris (strain 8004), this protein is Iron-sulfur cluster insertion protein ErpA.